Consider the following 394-residue polypeptide: Aspergillopepsin-1 (394 aa).

The first 20 residues, 1-20 (MVVFSKVTAAVFGLATIASA), serve as a signal peptide directing secretion. The propeptide at 21 to 69 (APAPPTRKGFTVQQQARPAQKKQVNLPAMYAHALTKFGGSVPESVKVAA) is activation peptide. The Peptidase A1 domain occupies 85–391 (YLTPVNVGGT…DSEGPRLGFA (307 aa)). Residues Asp101 and Asp283 contribute to the active site. Cysteines 319 and 354 form a disulfide.

This sequence belongs to the peptidase A1 family. In terms of assembly, monomer.

It localises to the secreted. The enzyme catalyses Hydrolysis of proteins with broad specificity. Generally favors hydrophobic residues in P1 and P1', but also accepts Lys in P1, which leads to activation of trypsinogen. Does not clot milk.. Secreted aspartic endopeptidase that allows assimilation of proteinaceous substrates. The scissile peptide bond is attacked by a nucleophilic water molecule activated by two aspartic residues in the active site. Shows a broad primary substrate specificity. Favors hydrophobic residues at the P1 and P1' positions, but also accepts a lysine residue in the P1 position, leading to the activation of trypsinogen and chymotrypsinogen A. This chain is Aspergillopepsin-1 (pepA), found in Aspergillus clavatus (strain ATCC 1007 / CBS 513.65 / DSM 816 / NCTC 3887 / NRRL 1 / QM 1276 / 107).